The following is a 196-amino-acid chain: Thymidine kinase (196 aa).

ATP is bound by residues 9–16 and 87–90; these read SAMNAGKS and DECQ. E88 functions as the Proton acceptor in the catalytic mechanism. Residues C145, C147, C182, and H185 each coordinate Zn(2+).

Belongs to the thymidine kinase family. In terms of assembly, homotetramer.

The protein localises to the cytoplasm. The enzyme catalyses thymidine + ATP = dTMP + ADP + H(+). This Yersinia pestis protein is Thymidine kinase.